The sequence spans 284 residues: MGMGTSTFVIRWVNLLTMLLAVAVIIFGVWMSTHNDGCRRSLTFPVIALGGFIFLISIIGFLGACKRSVALLWIYLAVLLIVLIAILVFTVLAFIVTNNGSGHTNPGLRYKEYKLNDYSSWFLKQLNNTSNWIRLKSCLVKSEQCRKLSKKYKTIKQLKSAELTPIEAGCCRPPSECGYPAVNASYYDLSFHSISSNKDCKLYKNLRTIKCYNCDSCKAGVAQYMKTEWRLVAIFNVVLFVVLISSLLSTRFDSEQSFGLLNGLVQISNITFKDCQTTTVPKQF.

Over M1–R11 the chain is Cytoplasmic. The chain crosses the membrane as a helical span at residues W12–S32. The Extracellular segment spans residues T33–T43. A helical transmembrane segment spans residues F44 to A64. Topologically, residues C65–Y75 are cytoplasmic. The helical transmembrane segment at L76–V96 threads the bilayer. Residues T97–E228 lie on the Extracellular side of the membrane. N99, N128, and N183 each carry an N-linked (GlcNAc...) asparagine glycan. Residues W229–S249 form a helical membrane-spanning segment. Over T250–F284 the chain is Cytoplasmic.

Belongs to the tetraspanin (TM4SF) family.

The protein resides in the membrane. Its function is as follows. May be involved in the regulation of cell differentiation. This Arabidopsis thaliana (Mouse-ear cress) protein is Tetraspanin-10 (TET10).